The sequence spans 301 residues: Putative phosphoenolpyruvate synthase regulatory protein (301 aa).

Positions 1–24 (MSEPVAPDGAQPAPAGATPQPLQP) are enriched in low complexity. The segment at 1 to 27 (MSEPVAPDGAQPAPAGATPQPLQPIAG) is disordered. ADP is bound at residue 181-188 (GVSRSGKT).

This sequence belongs to the pyruvate, phosphate/water dikinase regulatory protein family. PSRP subfamily.

The enzyme catalyses [pyruvate, water dikinase] + ADP = [pyruvate, water dikinase]-phosphate + AMP + H(+). It catalyses the reaction [pyruvate, water dikinase]-phosphate + phosphate + H(+) = [pyruvate, water dikinase] + diphosphate. Bifunctional serine/threonine kinase and phosphorylase involved in the regulation of the phosphoenolpyruvate synthase (PEPS) by catalyzing its phosphorylation/dephosphorylation. This is Putative phosphoenolpyruvate synthase regulatory protein from Cupriavidus pinatubonensis (strain JMP 134 / LMG 1197) (Cupriavidus necator (strain JMP 134)).